The chain runs to 553 residues: Syntaxin-binding protein 4 (553 aa).

4 positions are modified to phosphoserine: serine 10, serine 12, serine 99, and serine 212. Residues 19–105 (AFQMITIAKE…RLESAWEIAF (87 aa)) enclose the PDZ domain. Positions 291-417 (SSEADEMERL…VLDCQLRKSE (127 aa)) form a coiled coil. Position 463 is a phosphoserine (serine 463). The WW domain occupies 496 to 529 (DCLPYGWEEAYTADGIKYFINHVTQTTSWIHPVM).

Interacts with STX4A. In terms of processing, phosphorylated on Ser-99 by PKB/AKT2 after insulin treatment. Phosphorylation on Ser-99 abolishes the interaction with STX4A.

The protein resides in the cytoplasm. Functionally, plays a role in the translocation of transport vesicles from the cytoplasm to the plasma membrane. Inhibits the translocation of SLC2A4 from intracellular vesicles to the plasma membrane by STX4A binding and preventing the interaction between STX4A and VAMP2. Stimulation with insulin disrupts the interaction with STX4A, leading to increased levels of SLC2A4 at the plasma membrane. May also play a role in the regulation of insulin release by pancreatic beta cells after stimulation by glucose. In Homo sapiens (Human), this protein is Syntaxin-binding protein 4 (STXBP4).